Consider the following 344-residue polypeptide: MGGLMKKNTVILGIESSCDETAASVVKNGNEIISSVVASQIESHKRFGGVVPEIASRHHVEQITLVIEEALTQANVTMDDLDGIAVTEGPGLVGALLIGVNAAKTLAFMHNLPLIGVHHIAGHIYANRFETEFKFPLLSLVVSGGHTELVLMKADNDFEIIGETRDDAAGEAYDKVARTLGLAYPGGVQIDKLAKEGEDTFHFPRAMMDDGSFDFSFSGLKSSFINTLHNLRQRGEEPNPNDMAASFQASVVDVLVSKTIRAAKKYDVKQLLLAGGVAANQGLRKRLIQEMKLELPDIELIIPPLSLCGDNAAMIAAAGTVSFLQGKRSSYDMNANPGLLLEDI.

Residues H119 and H123 each contribute to the Fe cation site. Residues 141–145 (VVSGG), D174, G187, D191, and N280 contribute to the substrate site. D310 contacts Fe cation.

It belongs to the KAE1 / TsaD family. Requires Fe(2+) as cofactor.

Its subcellular location is the cytoplasm. It catalyses the reaction L-threonylcarbamoyladenylate + adenosine(37) in tRNA = N(6)-L-threonylcarbamoyladenosine(37) in tRNA + AMP + H(+). Required for the formation of a threonylcarbamoyl group on adenosine at position 37 (t(6)A37) in tRNAs that read codons beginning with adenine. Is involved in the transfer of the threonylcarbamoyl moiety of threonylcarbamoyl-AMP (TC-AMP) to the N6 group of A37, together with TsaE and TsaB. TsaD likely plays a direct catalytic role in this reaction. This is tRNA N6-adenosine threonylcarbamoyltransferase from Listeria welshimeri serovar 6b (strain ATCC 35897 / DSM 20650 / CCUG 15529 / CIP 8149 / NCTC 11857 / SLCC 5334 / V8).